Here is a 347-residue protein sequence, read N- to C-terminus: NADH-ubiquinone oxidoreductase chain 2 (347 aa).

Transmembrane regions (helical) follow at residues 3 to 23 (PPIF…VMTS), 25 to 45 (HWML…PILM), 59 to 79 (YFLT…INLL), 96 to 116 (ILMT…FWVP), 122 to 142 (ISLS…LSIL), 149 to 169 (INPH…GWGG), 178 to 198 (IMAY…LYNP), 201 to 221 (MFLN…LFML), 237 to 257 (APLI…LPPL), 274 to 294 (EMII…YFYM), and 323 to 343 (TIFL…TPMI).

The protein belongs to the complex I subunit 2 family. In terms of assembly, core subunit of respiratory chain NADH dehydrogenase (Complex I) which is composed of 45 different subunits. Interacts with TMEM242.

The protein resides in the mitochondrion inner membrane. It catalyses the reaction a ubiquinone + NADH + 5 H(+)(in) = a ubiquinol + NAD(+) + 4 H(+)(out). Functionally, core subunit of the mitochondrial membrane respiratory chain NADH dehydrogenase (Complex I) which catalyzes electron transfer from NADH through the respiratory chain, using ubiquinone as an electron acceptor. Essential for the catalytic activity and assembly of complex I. The protein is NADH-ubiquinone oxidoreductase chain 2 of Viverra tangalunga (Malayan civet).